We begin with the raw amino-acid sequence, 349 residues long: Protein RecA (349 aa).

67–74 (GPESSGKT) lines the ATP pocket.

The protein belongs to the RecA family.

It is found in the cytoplasm. Functionally, can catalyze the hydrolysis of ATP in the presence of single-stranded DNA, the ATP-dependent uptake of single-stranded DNA by duplex DNA, and the ATP-dependent hybridization of homologous single-stranded DNAs. It interacts with LexA causing its activation and leading to its autocatalytic cleavage. The polypeptide is Protein RecA (Chlamydia abortus (strain DSM 27085 / S26/3) (Chlamydophila abortus)).